We begin with the raw amino-acid sequence, 190 residues long: MKGKLKKFYNLVEALETLPSIGKKSAGRLAFHMVLHSPMDALKLAHAIEDAVSSIHRCTQCGGLSEDELCYICSDELRDRSSLCLVESARDIYVIEESGEYHGLYFVFESLNERILANLKEMIKNNGVQEIIFAFTPSMQSDATMLYIEDQLQEFHLHFTKIAQGVPTGVHLENVDMLSLSKAISERVKI.

Residues 58-73 (CTQCGGLSEDELCYIC) form a C4-type zinc finger. Positions 81–167 (SSLCLVESAR…HFTKIAQGVP (87 aa)) constitute a Toprim domain.

The protein belongs to the RecR family.

In terms of biological role, may play a role in DNA repair. It seems to be involved in an RecBC-independent recombinational process of DNA repair. It may act with RecF and RecO. This is Recombination protein RecR from Nitratiruptor sp. (strain SB155-2).